Here is a 328-residue protein sequence, read N- to C-terminus: Flap endonuclease 1 (328 aa).

An N-domain region spans residues 1-98; it reads MGVKLRDVVS…ETVSRRADIR (98 aa). 7 residues coordinate Mg(2+): Asp27, Asp80, Glu152, Glu154, Asp173, Asp175, and Asp226. The I-domain stretch occupies residues 116–247; that stretch reads RAKKYAVRSS…RGLKLIREKG (132 aa). An interaction with PCNA region spans residues 320 to 328; it reads TQKSLEDWF.

Belongs to the XPG/RAD2 endonuclease family. FEN1 subfamily. Interacts with PCNA. PCNA stimulates the nuclease activity without altering cleavage specificity. The cofactor is Mg(2+).

Functionally, structure-specific nuclease with 5'-flap endonuclease and 5'-3' exonuclease activities involved in DNA replication and repair. During DNA replication, cleaves the 5'-overhanging flap structure that is generated by displacement synthesis when DNA polymerase encounters the 5'-end of a downstream Okazaki fragment. Binds the unpaired 3'-DNA end and kinks the DNA to facilitate 5' cleavage specificity. Cleaves one nucleotide into the double-stranded DNA from the junction in flap DNA, leaving a nick for ligation. Also involved in the base excision repair (BER) pathway. Acts as a genome stabilization factor that prevents flaps from equilibrating into structures that lead to duplications and deletions. Also possesses 5'-3' exonuclease activity on nicked or gapped double-stranded DNA. This is Flap endonuclease 1 from Methanothermobacter thermautotrophicus (strain ATCC 29096 / DSM 1053 / JCM 10044 / NBRC 100330 / Delta H) (Methanobacterium thermoautotrophicum).